Consider the following 86-residue polypeptide: Small ribosomal subunit protein bS16 (86 aa).

This sequence belongs to the bacterial ribosomal protein bS16 family.

In Syntrophotalea carbinolica (strain DSM 2380 / NBRC 103641 / GraBd1) (Pelobacter carbinolicus), this protein is Small ribosomal subunit protein bS16.